The sequence spans 251 residues: tRNA (guanine-N(1)-)-methyltransferase (251 aa).

Residues Gly-113 and 133-138 (IGDYVL) contribute to the S-adenosyl-L-methionine site.

This sequence belongs to the RNA methyltransferase TrmD family. Homodimer.

It is found in the cytoplasm. The enzyme catalyses guanosine(37) in tRNA + S-adenosyl-L-methionine = N(1)-methylguanosine(37) in tRNA + S-adenosyl-L-homocysteine + H(+). Functionally, specifically methylates guanosine-37 in various tRNAs. The sequence is that of tRNA (guanine-N(1)-)-methyltransferase from Pectobacterium atrosepticum (strain SCRI 1043 / ATCC BAA-672) (Erwinia carotovora subsp. atroseptica).